The sequence spans 151 residues: Cytochrome c-type biogenesis protein CcmE (151 aa).

The Cytoplasmic portion of the chain corresponds to M1–R8. Residues L9–A29 form a helical; Signal-anchor for type II membrane protein membrane-spanning segment. The Periplasmic segment spans residues L30 to G151. Heme contacts are provided by H124 and Y128.

The protein belongs to the CcmE/CycJ family.

Its subcellular location is the cell inner membrane. Functionally, heme chaperone required for the biogenesis of c-type cytochromes. Transiently binds heme delivered by CcmC and transfers the heme to apo-cytochromes in a process facilitated by CcmF and CcmH. This Pseudomonas fluorescens biotype C protein is Cytochrome c-type biogenesis protein CcmE.